The sequence spans 513 residues: MHFARVVKSIHSVYSLPMCDTQIVVDTEKIRKAIELQLPIAITTYTLPRDMDIYIGQVAKTILDLIGQPHVKDYLTYCISELTTNAKKANTKRIYFREKGLDIFDPQDYKRGMKSFKEESLENINHYLKLQQQEGLYVKVTMQVLSHALVIEVINNCKMTPMEFKRVFDKRVRARRYSGLEEALAHILDNSEGAGLGLVIMMLMLKKLGLEEDVYRLVVEEDRTISRMVVPRNIEIQTQTTKLAASIADRIDDIPQLPSKLLEIQRAIENPDVQLSDIVALISQDVALVTDLLKLVNSARFGMNKRCLDISEAVKRVGLRGLQNLLYSVGAGRVLQSTDDERKQLWNQAYRTGYFALGLAKATGDQALIADSYICGLLHNLGEVVFTSAYPEMLIKLTEIQAERNIPPHVLDTIMSDVGHAEIGAALAQRWNLPEPVINTIRFHHNLPHAPEEYKPLISTVAFANMTIRFLDGETPYEQIPRSLLSFFRIQSEQQLRTTAQTLQSSFEAEQTA.

Residues 254–447 (IPQLPSKLLE…INTIRFHHNL (194 aa)) enclose the HDOD domain.

This is an uncharacterized protein from Treponema pallidum (strain Nichols).